A 463-amino-acid chain; its full sequence is Glutamate--tRNA ligase (463 aa).

Positions 8–18 match the 'HIGH' region motif; the sequence is PSPTGYLHIGG. The 'KMSKS' region motif lies at 236 to 240; the sequence is RLSKR. Residue K239 coordinates ATP.

It belongs to the class-I aminoacyl-tRNA synthetase family. Glutamate--tRNA ligase type 1 subfamily. As to quaternary structure, monomer.

It localises to the cytoplasm. The catalysed reaction is tRNA(Glu) + L-glutamate + ATP = L-glutamyl-tRNA(Glu) + AMP + diphosphate. Its function is as follows. Catalyzes the attachment of glutamate to tRNA(Glu) in a two-step reaction: glutamate is first activated by ATP to form Glu-AMP and then transferred to the acceptor end of tRNA(Glu). This Nitrosomonas eutropha (strain DSM 101675 / C91 / Nm57) protein is Glutamate--tRNA ligase.